A 359-amino-acid polypeptide reads, in one-letter code: Histidinol-phosphate aminotransferase (359 aa).

The residue at position 217 (Lys-217) is an N6-(pyridoxal phosphate)lysine.

The protein belongs to the class-II pyridoxal-phosphate-dependent aminotransferase family. Histidinol-phosphate aminotransferase subfamily. In terms of assembly, homodimer. Requires pyridoxal 5'-phosphate as cofactor.

It catalyses the reaction L-histidinol phosphate + 2-oxoglutarate = 3-(imidazol-4-yl)-2-oxopropyl phosphate + L-glutamate. The protein operates within amino-acid biosynthesis; L-histidine biosynthesis; L-histidine from 5-phospho-alpha-D-ribose 1-diphosphate: step 7/9. This Salmonella enteritidis PT4 (strain P125109) protein is Histidinol-phosphate aminotransferase.